The primary structure comprises 343 residues: MAKTYKIAVIPGDGIGKEVTPWAQKALEKAAEGVADFEYENFDLGAERYLRDGAILPEDEEGRIKANDAILLGAVGDPRIKAGILERGLLLKLRFDLDQYVNLRPSKLYKGVTSPLANPGDIDFVVVREGTEGLYCGAGGAVRRNTPQEVATEVSINTAYGVERVVRYAFKLAMKRKKHVTLVHKKNVLVNAGDMWQRIVDKVGEEYPEVTHDYQHIDAATIFLVSDPSRFDVILTDNLFGDILTDEAGSVVGGVGYSASGCINASDEFPSMFEPIHGSAPDIAGQNKANPTAAILSAAMLLEHLGFDDAAKKIHTAVEADIEELGSTVRSTDQVGKDILARM.

Substrate is bound by residues arginine 94, arginine 104, arginine 128, and aspartate 218. The Mg(2+) site is built by aspartate 218, aspartate 242, and aspartate 246. Position 278–290 (glycine 278–asparagine 290) interacts with NAD(+).

The protein belongs to the isocitrate and isopropylmalate dehydrogenases family. LeuB type 2 subfamily. As to quaternary structure, homodimer. Mg(2+) serves as cofactor. The cofactor is Mn(2+).

It localises to the cytoplasm. It carries out the reaction (2R,3S)-3-isopropylmalate + NAD(+) = 4-methyl-2-oxopentanoate + CO2 + NADH. It participates in amino-acid biosynthesis; L-leucine biosynthesis; L-leucine from 3-methyl-2-oxobutanoate: step 3/4. Its function is as follows. Catalyzes the oxidation of 3-carboxy-2-hydroxy-4-methylpentanoate (3-isopropylmalate) to 3-carboxy-4-methyl-2-oxopentanoate. The product decarboxylates to 4-methyl-2 oxopentanoate. The sequence is that of 3-isopropylmalate dehydrogenase from Bifidobacterium longum subsp. infantis (strain ATCC 15697 / DSM 20088 / JCM 1222 / NCTC 11817 / S12).